Here is a 149-residue protein sequence, read N- to C-terminus: Ribonuclease HI (149 aa).

Positions 1–142 (MTPKVTIYTD…ADALANEGLR (142 aa)) constitute an RNase H type-1 domain. Positions 10, 48, 70, and 134 each coordinate Mg(2+).

This sequence belongs to the RNase H family. In terms of assembly, monomer. Mg(2+) is required as a cofactor.

The protein resides in the cytoplasm. The enzyme catalyses Endonucleolytic cleavage to 5'-phosphomonoester.. In terms of biological role, endonuclease that specifically degrades the RNA of RNA-DNA hybrids. The protein is Ribonuclease HI of Caulobacter vibrioides (strain ATCC 19089 / CIP 103742 / CB 15) (Caulobacter crescentus).